A 382-amino-acid polypeptide reads, in one-letter code: Na(+)/H(+) antiporter NhaA (382 aa).

Transmembrane regions (helical) follow at residues 11 to 31 (FSVP…LDPA), 47 to 67 (FHFV…AVEI), 88 to 108 (LATL…NAII), 116 to 136 (GWGI…RLVF), 145 to 165 (FLLL…AVFY), 170 to 190 (HPTE…AYIL), 261 to 283 (IVVD…SSVG), 299 to 319 (LGIF…PQQV), 327 to 347 (TGLV…VAFV), and 353 to 373 (GSAK…IMLG).

The protein belongs to the NhaA Na(+)/H(+) (TC 2.A.33) antiporter family.

Its subcellular location is the cell inner membrane. It carries out the reaction Na(+)(in) + 2 H(+)(out) = Na(+)(out) + 2 H(+)(in). Its function is as follows. Na(+)/H(+) antiporter that extrudes sodium in exchange for external protons. The polypeptide is Na(+)/H(+) antiporter NhaA (Geobacter sulfurreducens (strain ATCC 51573 / DSM 12127 / PCA)).